The chain runs to 146 residues: MQKKVTIYTDGACSGNPGKGGWGALLMFGSVKRELSGYSPATTNNRMELMAAIQALEALKEPCEVALYSDSSYLVNAINKGWLKRWTSNNWKTAAKKPVENIDLWKMILELIRLHSVTFHKVKGHSDNEFNNRCDYLATQAIKNNR.

In terms of domain architecture, RNase H type-1 spans 1–143 (MQKKVTIYTD…CDYLATQAIK (143 aa)). Residues aspartate 10, glutamate 48, aspartate 70, and aspartate 135 each contribute to the Mg(2+) site.

This sequence belongs to the RNase H family. Monomer. The cofactor is Mg(2+).

It is found in the cytoplasm. It carries out the reaction Endonucleolytic cleavage to 5'-phosphomonoester.. Its function is as follows. Endonuclease that specifically degrades the RNA of RNA-DNA hybrids. The chain is Ribonuclease H from Chlorobium phaeobacteroides (strain BS1).